The primary structure comprises 128 residues: Putative protein SEM1, isoform 2 (128 aa).

Positions 22–32 are enriched in basic residues; sequence KHGIKRGRRPS. Residues 22–42 form a disordered region; the sequence is KHGIKRGRRPSIRSPAQRARG.

The chain is Putative protein SEM1, isoform 2 from Homo sapiens (Human).